A 313-amino-acid polypeptide reads, in one-letter code: MNTFSQVWVFSDTPSRLPELMNGAQALANQINAFVLNDADGAQAIQLGANHVWKLNGKPDDRMIEDYASVMADTIRQHGADGLVLLPNTRRGKLLAAKLGYRLKAAVSNDASTVSVQDGKATVKHMVYGGLAIGEERIATPYAVLTISSGTFDAAQPDASRTGETHTVEWQAPAVAITRTATQARQSNSVDLDKARLVVSVGRGIGSKENIALAEQLCKAIGAELACSRPVAENEKWMEHERYVGISNLMLKPELYLAVGISGQIQHMVGANASQTIFAINKDKNAPIFQYADYGIVGDAVKILPALTAALAR.

Residue 255 to 283 coordinates FAD; that stretch reads LYLAVGISGQIQHMVGANASQTIFAINKD.

This sequence belongs to the ETF alpha-subunit/FixB family. As to quaternary structure, heterodimer of FixA and FixB.

It participates in amine and polyamine metabolism; carnitine metabolism. Its function is as follows. Required for anaerobic carnitine reduction. May bring reductant to CaiA. The polypeptide is Protein FixB (Escherichia coli O157:H7).